Reading from the N-terminus, the 216-residue chain is Ribosomal RNA large subunit methyltransferase E (216 aa).

Positions 67, 69, 87, 103, and 128 each coordinate S-adenosyl-L-methionine. The active-site Proton acceptor is K168.

Belongs to the class I-like SAM-binding methyltransferase superfamily. RNA methyltransferase RlmE family.

The protein localises to the cytoplasm. The enzyme catalyses uridine(2552) in 23S rRNA + S-adenosyl-L-methionine = 2'-O-methyluridine(2552) in 23S rRNA + S-adenosyl-L-homocysteine + H(+). Specifically methylates the uridine in position 2552 of 23S rRNA at the 2'-O position of the ribose in the fully assembled 50S ribosomal subunit. The polypeptide is Ribosomal RNA large subunit methyltransferase E (Acinetobacter baylyi (strain ATCC 33305 / BD413 / ADP1)).